A 599-amino-acid chain; its full sequence is Elongation factor 4 (599 aa).

The 183-residue stretch at 4–186 (EHIRNFSIIA…EIVKKIPPPK (183 aa)) folds into the tr-type G domain. GTP is bound by residues 16–21 (DHGKST) and 133–136 (NKID).

It belongs to the TRAFAC class translation factor GTPase superfamily. Classic translation factor GTPase family. LepA subfamily.

The protein resides in the cell inner membrane. It carries out the reaction GTP + H2O = GDP + phosphate + H(+). Its function is as follows. Required for accurate and efficient protein synthesis under certain stress conditions. May act as a fidelity factor of the translation reaction, by catalyzing a one-codon backward translocation of tRNAs on improperly translocated ribosomes. Back-translocation proceeds from a post-translocation (POST) complex to a pre-translocation (PRE) complex, thus giving elongation factor G a second chance to translocate the tRNAs correctly. Binds to ribosomes in a GTP-dependent manner. This Citrifermentans bemidjiense (strain ATCC BAA-1014 / DSM 16622 / JCM 12645 / Bem) (Geobacter bemidjiensis) protein is Elongation factor 4.